Reading from the N-terminus, the 305-residue chain is LysM and putative peptidoglycan-binding domain-containing protein 3 (305 aa).

At 1–216 (MAGRNQNRTV…PYYGADWGIG (216 aa)) the chain is on the extracellular side. N-linked (GlcNAc...) asparagine glycans are attached at residues Asn7 and Asn26. Ser55 bears the Phosphoserine mark. Positions 65–109 (LTKDIQEGDTLNAVALQYCCTVADIKRVNNLISDQDFFALRSIKI) constitute a LysM domain. N-linked (GlcNAc...) asparagine glycosylation is present at Asn199. The chain crosses the membrane as a helical span at residues 217–237 (WWTAVVIMLIVGIITPVFYLL). Residues 238 to 305 (YYEILAKVDV…PQAHDAQHKT (68 aa)) are Cytoplasmic-facing. The interval 253-305 (VGSSHLHPGLTPPTQHREMENEIGPTKGIPVGQQDDHKLYRQDPQAHDAQHKT) is disordered. Residues 286–305 (QDDHKLYRQDPQAHDAQHKT) show a composition bias toward basic and acidic residues.

It localises to the cell membrane. The protein resides in the golgi apparatus. Its function is as follows. Essential for Golgi structural integrity. This Mus musculus (Mouse) protein is LysM and putative peptidoglycan-binding domain-containing protein 3 (Lysmd3).